The sequence spans 436 residues: 3-ketoacyl-CoA thiolase (436 aa).

Cysteine 99 functions as the Acyl-thioester intermediate in the catalytic mechanism. Residues histidine 392 and cysteine 422 each act as proton acceptor in the active site.

The protein belongs to the thiolase-like superfamily. Thiolase family. In terms of assembly, heterotetramer of two alpha chains (FadJ) and two beta chains (FadI).

It is found in the cytoplasm. The enzyme catalyses an acyl-CoA + acetyl-CoA = a 3-oxoacyl-CoA + CoA. It participates in lipid metabolism; fatty acid beta-oxidation. Functionally, catalyzes the final step of fatty acid oxidation in which acetyl-CoA is released and the CoA ester of a fatty acid two carbons shorter is formed. The polypeptide is 3-ketoacyl-CoA thiolase (Salmonella paratyphi A (strain ATCC 9150 / SARB42)).